Consider the following 678-residue polypeptide: THO complex subunit 5 homolog A (678 aa).

2 disordered regions span residues 1–35 (MASDSLKKRKPKVNRNEDVKRGRHEDQEGRYYSEE) and 294–329 (ALFKPPEDSQDDESDSDAEEEQTTKRRRPTLGVQLD). The short motif at 7–10 (KKRK) is the Nuclear localization signal element. Positions 14 to 35 (NRNEDVKRGRHEDQEGRYYSEE) are enriched in basic and acidic residues. Positions 301-314 (DSQDDESDSDAEEE) are enriched in acidic residues.

The protein belongs to the THOC5 family. Component of the THO subcomplex, which is composed of thoc1, thoc2, thoc3, thoc5, thoc6 and thoc7. Component of the transcription/export (TREX) complex at least composed of alyref/thoc4, ddx39b, sarnp/cip29, chtop and the THO subcomplex. Interacts with thoc7.

The protein resides in the nucleus. The protein localises to the nucleus speckle. It localises to the cytoplasm. Functionally, component of the THO subcomplex of the TREX complex which is thought to couple mRNA transcription, processing and nuclear export, and which specifically associates with spliced mRNA and not with unspliced pre-mRNA. Plays a key structural role in the oligomerization of the THO-ddx39b complex. TREX is recruited to spliced mRNAs by a transcription-independent mechanism, binds to mRNA upstream of the exon-junction complex (EJC) and is recruited in a splicing- and cap-dependent manner to a region near the 5' end of the mRNA where it functions in mRNA export to the cytoplasm via the TAP/NXF1 pathway. May be involved in cell differentiation. The polypeptide is THO complex subunit 5 homolog A (thoc5-a) (Xenopus laevis (African clawed frog)).